Here is a 1133-residue protein sequence, read N- to C-terminus: DNA-directed RNA polymerase III subunit RPC2 (1133 aa).

Lysine 186 provides a ligand contact to RNA. Residue arginine 195 coordinates DNA. Arginine 213 is a binding site for RNA. Residue aspartate 432 participates in DNA binding. Residues glutamine 438 and glutamine 692 each contribute to the RNA site. Residue aspartate 753 coordinates Mg(2+). RNA contacts are provided by lysine 896, lysine 904, and lysine 1019. Residues arginine 1039, serine 1040, and arginine 1046 each coordinate DNA. Positions 1080, 1083, 1092, and 1095 each coordinate Zn(2+). A C4-type zinc finger spans residues 1080 to 1095 (CGQCGLLGYSGWCHYC).

This sequence belongs to the RNA polymerase beta chain family. As to quaternary structure, component of the RNA polymerase III (Pol III) complex consisting of 17 subunits: a ten-subunit catalytic core composed of POLR3A/RPC1, POLR3B/RPC2, POLR1C/RPAC1, POLR1D/RPAC2, POLR3K/RPC10, POLR2E/RPABC1, POLR2F/RPABC2, POLR2H/RPABC3, POLR2K/RPABC4 and POLR2L/RPABC5; a mobile stalk composed of two subunits POLR3H/RPC8 and CRCP/RPC9, protruding from the core and functioning primarily in transcription initiation; and additional subunits homologous to general transcription factors of the RNA polymerase II machinery, POLR3C/RPC3-POLR3F/RPC6-POLR3G/RPC7 heterotrimer required for transcription initiation and POLR3D/RPC4-POLR3E/RPC5 heterodimer involved in both transcription initiation and termination. Mg(2+) serves as cofactor.

It localises to the nucleus. It is found in the cytoplasm. The protein localises to the cytosol. It carries out the reaction RNA(n) + a ribonucleoside 5'-triphosphate = RNA(n+1) + diphosphate. In terms of biological role, catalytic core component of RNA polymerase III (Pol III), a DNA-dependent RNA polymerase which synthesizes small non-coding RNAs using the four ribonucleoside triphosphates as substrates. Synthesizes 5S rRNA, snRNAs, tRNAs and miRNAs from at least 500 distinct genomic loci. Pol III-mediated transcription cycle proceeds through transcription initiation, transcription elongation and transcription termination stages. During transcription initiation, Pol III is recruited to DNA promoters type I, II or III with the help of general transcription factors and other specific initiation factors. Once the polymerase has escaped from the promoter it enters the elongation phase during which RNA is actively polymerized, based on complementarity with the template DNA strand. Transcription termination involves the release of the RNA transcript and polymerase from the DNA. Forms Pol III active center together with the largest subunit POLR3A/RPC1. A single-stranded DNA template strand of the promoter is positioned within the central active site cleft of Pol III. Appends one nucleotide at a time to the 3' end of the nascent RNA, with POLR3A/RPC1 contributing a Mg(2+)-coordinating DxDGD motif, and POLR3B/RPC2 participating in the coordination of a second Mg(2+) ion and providing lysine residues believed to facilitate Watson-Crick base pairing between the incoming nucleotide and template base. Typically, Mg(2+) ions direct a 5' nucleoside triphosphate to form a phosphodiester bond with the 3' hydroxyl of the preceding nucleotide of the nascent RNA, with the elimination of pyrophosphate. Pol III plays a key role in sensing and limiting infection by intracellular bacteria and DNA viruses. Acts as a nuclear and cytosolic DNA sensor involved in innate immune response. Can sense non-self dsDNA that serves as template for transcription into dsRNA. The non-self RNA polymerase III transcripts, such as Epstein-Barr virus-encoded RNAs (EBERs) induce type I interferon and NF-kappa-B through the RIG-I pathway. In Homo sapiens (Human), this protein is DNA-directed RNA polymerase III subunit RPC2.